We begin with the raw amino-acid sequence, 266 residues long: Outer membrane protein OmpK (266 aa).

A signal peptide spans 1–20; that stretch reads MRKSLLALSLLAATSAPVLA.

This sequence belongs to the nucleoside-specific channel-forming outer membrane porin (Tsx) (TC 1.B.10) family.

It is found in the cell outer membrane. Serves as receptor for a broad-host-range vibriophage, KVP40. The sequence is that of Outer membrane protein OmpK (ompK) from Vibrio parahaemolyticus serotype O3:K6 (strain RIMD 2210633).